The following is a 442-amino-acid chain: MVTLTSSSSTPNVSFDFMMNNNNNSNNLYGPFSSSSTSFSYLTSKEDALTQKNLMSGITNDVLGINKKASEDLEISVFGAEKYFNGDMDSDHSPRLVSPLPDPEVPIERIFVGPKQSSKNSSETPSLRSESSWNSQSLLLQSKYVEKKKNIKKNSSCNSYFQEKDMSSNHKVSNKKSFLATLGCRCVCSNWSSVDVVDDKRRSSGLKKIKTQLSFSGDLSSEMKIHQQQQEAMLEQRKSLEIFGSPLIEKRIIQKKFPWEYSSSAKKEEHGFSVKYEEEEDGSVSDVSTDLFEIESLTGKANPFLARQGSSDPDSPDGYAPSEVSIQWSVVTASVADFSVMSECATSPVKKNRSFQIPRIPIMAKSNREIAPQRRKSSSSGLLMGCKSHKSVRVSGDSYTSMNRTPSYVPRFPVEANPTSTETRRRISSSSVSHTQSPFLYT.

Residues 110–130 (IFVGPKQSSKNSSETPSLRSE) form a disordered region. Over residues 121 to 130 (SSETPSLRSE) the composition is skewed to low complexity. Residues Ser239 and Ser245 each carry the phosphoserine modification. Positions 394-442 (VSGDSYTSMNRTPSYVPRFPVEANPTSTETRRRISSSSVSHTQSPFLYT) are disordered. Polar residues predominate over residues 397-406 (DSYTSMNRTP). A compositionally biased stretch (low complexity) spans 428–442 (SSSSVSHTQSPFLYT).

The protein belongs to the PKS family. As to quaternary structure, interacts with PKS1, RPT3, PHOT1 and PHOT2. Expressed in leaves, with the strongest expression on edges of the laminas. Not found in roots.

It is found in the cell membrane. Its function is as follows. Acts predominantly in the phot1 pathway. Involved in the leaf positioning and also in the phot2 pathway controlling the leaf flattening. Component of the network that modulates the very low-fluence response (VLFR) branch of phyA signaling. Regulates phytochrome-mediated photomorphogenesis and hypocotyl phototropism. May act by controlling auxin homeostasis. In Arabidopsis thaliana (Mouse-ear cress), this protein is Protein PHYTOCHROME KINASE SUBSTRATE 2 (PKS2).